Consider the following 155-residue polypeptide: Xanthine-guanine phosphoribosyltransferase (155 aa).

Residues 37-38 (RG) and 91-99 (DDLVDTGNT) contribute to the 5-phospho-alpha-D-ribose 1-diphosphate site. Aspartate 92 lines the Mg(2+) pocket. Guanine contacts are provided by aspartate 95 and isoleucine 138. Xanthine-binding residues include aspartate 95 and isoleucine 138. GMP contacts are provided by residues 95 to 99 (DTGNT) and 137 to 138 (WI).

Belongs to the purine/pyrimidine phosphoribosyltransferase family. XGPT subfamily. Homotetramer. The cofactor is Mg(2+).

Its subcellular location is the cell inner membrane. It carries out the reaction GMP + diphosphate = guanine + 5-phospho-alpha-D-ribose 1-diphosphate. The catalysed reaction is XMP + diphosphate = xanthine + 5-phospho-alpha-D-ribose 1-diphosphate. The enzyme catalyses IMP + diphosphate = hypoxanthine + 5-phospho-alpha-D-ribose 1-diphosphate. It functions in the pathway purine metabolism; GMP biosynthesis via salvage pathway; GMP from guanine: step 1/1. Its pathway is purine metabolism; XMP biosynthesis via salvage pathway; XMP from xanthine: step 1/1. Functionally, acts on guanine, xanthine and to a lesser extent hypoxanthine. In terms of biological role, purine salvage pathway enzyme that catalyzes the transfer of the ribosyl-5-phosphate group from 5-phospho-alpha-D-ribose 1-diphosphate (PRPP) to the N9 position of the 6-oxopurines guanine and xanthine to form the corresponding ribonucleotides GMP (guanosine 5'-monophosphate) and XMP (xanthosine 5'-monophosphate), with the release of PPi. To a lesser extent, also acts on hypoxanthine. The polypeptide is Xanthine-guanine phosphoribosyltransferase (Haemophilus influenzae (strain ATCC 51907 / DSM 11121 / KW20 / Rd)).